We begin with the raw amino-acid sequence, 53 residues long: uncharacterized protein (53 aa).

This is an uncharacterized protein from Archaeoglobus fulgidus (strain ATCC 49558 / DSM 4304 / JCM 9628 / NBRC 100126 / VC-16).